The primary structure comprises 421 residues: Imidazolonepropionase (421 aa).

Fe(3+) contacts are provided by H81 and H83. 2 residues coordinate Zn(2+): H81 and H83. Residues R90, Y153, and H186 each coordinate 4-imidazolone-5-propanoate. Y153 is a binding site for N-formimidoyl-L-glutamate. Fe(3+) is bound at residue H251. H251 provides a ligand contact to Zn(2+). E254 serves as a coordination point for 4-imidazolone-5-propanoate. Residue D326 coordinates Fe(3+). D326 provides a ligand contact to Zn(2+). 2 residues coordinate N-formimidoyl-L-glutamate: N328 and G330. S331 is a 4-imidazolone-5-propanoate binding site.

The protein belongs to the metallo-dependent hydrolases superfamily. HutI family. Zn(2+) serves as cofactor. It depends on Fe(3+) as a cofactor.

The protein resides in the cytoplasm. It carries out the reaction 4-imidazolone-5-propanoate + H2O = N-formimidoyl-L-glutamate. It participates in amino-acid degradation; L-histidine degradation into L-glutamate; N-formimidoyl-L-glutamate from L-histidine: step 3/3. Functionally, catalyzes the hydrolytic cleavage of the carbon-nitrogen bond in imidazolone-5-propanoate to yield N-formimidoyl-L-glutamate. It is the third step in the universal histidine degradation pathway. The polypeptide is Imidazolonepropionase (Streptococcus pyogenes serotype M12 (strain MGAS2096)).